The sequence spans 413 residues: Precorrin-6Y C(5,15)-methyltransferase [decarboxylating] (413 aa).

Belongs to the precorrin methyltransferase family.

It catalyses the reaction precorrin-6B + 2 S-adenosyl-L-methionine = precorrin-8X + 2 S-adenosyl-L-homocysteine + CO2 + 3 H(+). The protein operates within cofactor biosynthesis; adenosylcobalamin biosynthesis; cob(II)yrinate a,c-diamide from precorrin-2 (aerobic route): step 7/10. Functionally, catalyzes the methylation of both C-5 and C-15 in precorrin-6Y to form precorrin-8X. This chain is Precorrin-6Y C(5,15)-methyltransferase [decarboxylating] (cobL), found in Sinorhizobium sp.